The chain runs to 689 residues: Long-chain fatty acid transport protein 5 (689 aa).

The Cytoplasmic segment spans residues 1–29 (MGIWKKLTLLLLLLLLVGLGQPPWPAAMA). The next 2 helical transmembrane spans lie at 30 to 50 (LALR…LALL) and 55 to 75 (ISSW…LFLL). Over 76-689 (PLQPPPGLRW…QAVCEGTWNL (614 aa)) the chain is Cytoplasmic. Residue 292–303 (IFTSGTTGLPKP) coordinates AMP.

Belongs to the ATP-dependent AMP-binding enzyme family. Liver-specific (at protein level). In liver expressed in a periportal distribution.

It localises to the endoplasmic reticulum membrane. Its subcellular location is the microsome. The protein localises to the cell membrane. It catalyses the reaction a fatty acid(in) = a fatty acid(out). It carries out the reaction cholate + ATP + CoA = choloyl-CoA + AMP + diphosphate. The enzyme catalyses (25R)-3alpha,7alpha,12alpha-trihydroxy-5beta-cholestan-26-oate + ATP + CoA = (25R)-3alpha,7alpha,12alpha-trihydroxy-5beta-cholestan-26-oyl-CoA + AMP + diphosphate. The catalysed reaction is chenodeoxycholate + ATP + CoA = chenodeoxycholoyl-CoA + AMP + diphosphate. It catalyses the reaction deoxycholate + ATP + CoA = deoxycholoyl-CoA + AMP + diphosphate. It carries out the reaction lithocholate + ATP + CoA = lithocholoyl-CoA + AMP + diphosphate. The enzyme catalyses a very long-chain fatty acid + ATP + CoA = a very long-chain fatty acyl-CoA + AMP + diphosphate. The catalysed reaction is tetracosanoate + ATP + CoA = tetracosanoyl-CoA + AMP + diphosphate. It catalyses the reaction hexacosanoate + ATP + CoA = hexacosanoyl-CoA + AMP + diphosphate. It carries out the reaction a long-chain fatty acid + ATP + CoA = a long-chain fatty acyl-CoA + AMP + diphosphate. The enzyme catalyses octadecanoate + ATP + CoA = octadecanoyl-CoA + AMP + diphosphate. The catalysed reaction is eicosanoate + ATP + CoA = eicosanoyl-CoA + AMP + diphosphate. Mediates the import of long-chain fatty acids (LCFA) by facilitating their transport across cell membranes. Also catalyzes the ATP-dependent formation of fatty acyl-CoA using LCFA and very-long-chain fatty acids (VLCFA) as substrates. Mainly functions as a bile acyl-CoA synthetase catalyzing the activation of bile acids via ATP-dependent formation of bile acid CoA thioesters which is necessary for their subsequent conjugation with glycine or taurine. Both primary bile acids (cholic acid and chenodeoxycholic acid) and secondary bile acids (deoxycholic acid and lithocholic acid) are the principal substrates. In vitro, activates 3-alpha,7-alpha,12-alpha-trihydroxy-5-beta-cholestanate ((25R)-3alpha,7alpha,12alpha-trihydroxy-5beta-cholestan-26-oate or THCA), the C27 precursor of cholic acid deriving from the de novo synthesis from cholesterol. Plays an important role in hepatic fatty acid uptake and bile acid reconjugation and recycling but not in de novo synthesis of bile acids. The chain is Long-chain fatty acid transport protein 5 (Slc27a5) from Mus musculus (Mouse).